The primary structure comprises 316 residues: Heme oxygenase 2 (316 aa).

Residues 1–12 (MSAEVETSEGVD) are compositionally biased toward acidic residues. The segment at 1-29 (MSAEVETSEGVDESEKKNSGALEKENQMR) is disordered. Position 2 is an N-acetylserine (Ser2). Residue Ser2 is modified to Phosphoserine. A compositionally biased stretch (basic and acidic residues) spans 13 to 27 (ESEKKNSGALEKENQ). His45 is a heme b binding site. HRM repeat units follow at residues 264–269 (KCPFYA) and 281–286 (SCPFRT). S-nitrosocysteine occurs at positions 265 and 282.

This sequence belongs to the heme oxygenase family. In terms of processing, S-nitrosylated by BLVRB.

It localises to the microsome. The protein resides in the endoplasmic reticulum. The catalysed reaction is heme b + 3 reduced [NADPH--hemoprotein reductase] + 3 O2 = biliverdin IXalpha + CO + Fe(2+) + 3 oxidized [NADPH--hemoprotein reductase] + 3 H2O + H(+). Functionally, heme oxygenase cleaves the heme ring at the alpha methene bridge to form biliverdin. Biliverdin is subsequently converted to bilirubin by biliverdin reductase. Under physiological conditions, the activity of heme oxygenase is highest in the spleen, where senescent erythrocytes are sequestrated and destroyed. Heme oxygenase 2 could be implicated in the production of carbon monoxide in brain where it could act as a neurotransmitter. In Macaca fascicularis (Crab-eating macaque), this protein is Heme oxygenase 2 (HMOX2).